The sequence spans 582 residues: Formate--tetrahydrofolate ligase (582 aa).

Residue 65–72 (TPLGEGKT) participates in ATP binding.

This sequence belongs to the formate--tetrahydrofolate ligase family.

It catalyses the reaction (6S)-5,6,7,8-tetrahydrofolate + formate + ATP = (6R)-10-formyltetrahydrofolate + ADP + phosphate. It participates in one-carbon metabolism; tetrahydrofolate interconversion. The chain is Formate--tetrahydrofolate ligase from Vibrio campbellii (strain ATCC BAA-1116).